The primary structure comprises 485 residues: UDP-N-acetylmuramate--L-alanine ligase (485 aa).

Position 125–131 (125–131 (GTHGKTT)) interacts with ATP.

It belongs to the MurCDEF family.

Its subcellular location is the cytoplasm. The catalysed reaction is UDP-N-acetyl-alpha-D-muramate + L-alanine + ATP = UDP-N-acetyl-alpha-D-muramoyl-L-alanine + ADP + phosphate + H(+). The protein operates within cell wall biogenesis; peptidoglycan biosynthesis. In terms of biological role, cell wall formation. The chain is UDP-N-acetylmuramate--L-alanine ligase from Stutzerimonas stutzeri (strain A1501) (Pseudomonas stutzeri).